A 299-amino-acid polypeptide reads, in one-letter code: tRNA dimethylallyltransferase (299 aa).

Residue 10–17 (GPTAVGKT) participates in ATP binding. Position 12 to 17 (12 to 17 (TAVGKT)) interacts with substrate. The segment at 35-38 (DSQQ) is interaction with substrate tRNA.

The protein belongs to the IPP transferase family. Monomer. It depends on Mg(2+) as a cofactor.

The enzyme catalyses adenosine(37) in tRNA + dimethylallyl diphosphate = N(6)-dimethylallyladenosine(37) in tRNA + diphosphate. In terms of biological role, catalyzes the transfer of a dimethylallyl group onto the adenine at position 37 in tRNAs that read codons beginning with uridine, leading to the formation of N6-(dimethylallyl)adenosine (i(6)A). The protein is tRNA dimethylallyltransferase of Streptococcus thermophilus (strain ATCC BAA-250 / LMG 18311).